A 271-amino-acid polypeptide reads, in one-letter code: Mitochondrial distribution and morphology protein 12 (271 aa).

The 267-residue stretch at 1-267 (MSFDINWSTL…WPSWINLDFN (267 aa)) folds into the SMP-LTD domain. Lys-49 is covalently cross-linked (Glycyl lysine isopeptide (Lys-Gly) (interchain with G-Cter in ubiquitin)).

This sequence belongs to the MDM12 family. Component of the ER-mitochondria encounter structure (ERMES) or MDM complex, composed of MMM1, MDM10, MDM12 and MDM34. An MMM1 homodimer associates with one molecule of MDM12 on each side in a pairwise head-to-tail manner, and the SMP-LTD domains of MMM1 and MDM12 generate a continuous hydrophobic tunnel for phospholipid trafficking. Interacts with PUF3.

The protein localises to the mitochondrion outer membrane. It localises to the endoplasmic reticulum membrane. Its function is as follows. Component of the ERMES/MDM complex, which serves as a molecular tether to connect the endoplasmic reticulum (ER) and mitochondria. Components of this complex are involved in the control of mitochondrial shape and protein biogenesis, and function in nonvesicular lipid trafficking between the ER and mitochondria. MDM12 is required for the interaction of the ER-resident membrane protein MMM1 and the outer mitochondrial membrane-resident beta-barrel protein MDM10. The MDM12-MMM1 subcomplex functions in the major beta-barrel assembly pathway that is responsible for biogenesis of all mitochondrial outer membrane beta-barrel proteins, and acts in a late step after the SAM complex. The MDM10-MDM12-MMM1 subcomplex further acts in the TOM40-specific pathway after the action of the MDM12-MMM1 complex. Essential for establishing and maintaining the structure of mitochondria and maintenance of mtDNA nucleoids. The sequence is that of Mitochondrial distribution and morphology protein 12 from Saccharomyces cerevisiae (strain AWRI1631) (Baker's yeast).